The chain runs to 88 residues: Small ribosomal subunit protein bS20 (88 aa).

Belongs to the bacterial ribosomal protein bS20 family.

In terms of biological role, binds directly to 16S ribosomal RNA. The chain is Small ribosomal subunit protein bS20 from Coprothermobacter proteolyticus (strain ATCC 35245 / DSM 5265 / OCM 4 / BT).